Consider the following 295-residue polypeptide: Threonine/homoserine exporter RhtA (295 aa).

Topologically, residues 1 to 9 are cytoplasmic; that stretch reads MPGSLRKMP. A helical transmembrane segment spans residues 10–30; the sequence is VWLPIVILLVAMASIQGGASL. Positions 30–135 constitute an EamA 1 domain; that stretch reads LAKSLFPLVG…VLAVLGLWFL (106 aa). Residues 31–38 are Periplasmic-facing; the sequence is AKSLFPLV. The helical transmembrane segment at 39–59 threads the bilayer; sequence GAPGVTALRLALGTLILIAFF. At 60-71 the chain is on the cytoplasmic side; that stretch reads KPWRLRFAKEQR. The helical transmembrane segment at 72–92 threads the bilayer; the sequence is LPLLFYGVSLGGMNYLFYLSI. Position 93 (Q93) is a topological domain, periplasmic. Residues 94–114 form a helical membrane-spanning segment; it reads TVPLGIAVALEFTGPLAVALF. The Cytoplasmic portion of the chain corresponds to 115–118; that stretch reads SSRR. Residues 119-139 form a helical membrane-spanning segment; it reads PVDFVWVVLAVLGLWFLLPLG. Topologically, residues 140 to 146 are periplasmic; the sequence is QDVSHVD. Residues 147–167 form a helical membrane-spanning segment; that stretch reads LTGCALALGAGACWAIYILSG. The region spanning 159-278 is the EamA 2 domain; sequence CWAIYILSGQ…LGAIIAASMG (120 aa). The Cytoplasmic segment spans residues 168–175; sequence QRAGAEHG. The helical transmembrane segment at 176-196 threads the bilayer; sequence PATVAIGSLIAALIFVPIGAL. Topologically, residues 197 to 200 are periplasmic; it reads QAGE. The helical transmembrane segment at 201 to 221 threads the bilayer; sequence ALWHWSVIPLGLAVAILSTAL. The Cytoplasmic portion of the chain corresponds to 222 to 237; that stretch reads PYSLEMIALTRLPTRT. The chain crosses the membrane as a helical span at residues 238-258; it reads FGTLMSMEPALAAVSGMIFLG. At 259 to 262 the chain is on the periplasmic side; sequence ETLT. The helical transmembrane segment at 263–283 threads the bilayer; that stretch reads PIQLLALGAIIAASMGSTLTV. Over 284-295 the chain is Cytoplasmic; that stretch reads RKESKIKELDIN.

The protein belongs to the drug/metabolite transporter (DMT) superfamily. 10 TMS drug/metabolite exporter (DME) (TC 2.A.7.3) family.

Its subcellular location is the cell inner membrane. Involved in the efflux of threonine and homoserine. This chain is Threonine/homoserine exporter RhtA (rhtA), found in Escherichia coli O157:H7.